Here is a 73-residue protein sequence, read N- to C-terminus: Ocellatin-PT7 (73 aa).

An N-terminal signal peptide occupies residues 1 to 22; it reads MAFLKKSLFLVLFLGLVSLSIC. Positions 23–39 are excised as a propeptide; sequence DEEKRQDEDDDDDDDEE.

Expressed by the skin glands.

It is found in the secreted. Functionally, has antibacterial activity against Gram-negative bacteria E.coli ATCC 25922 (MIC=60 uM) and S.choleraesuis ATCC 14028 (MIC=240 uM) and against Gram-positive bacterium S.aureus ATCC 29313 (MIC=240 uM). Shows no hemolytic activity and no cytotoxicity. This Leptodactylus pustulatus (Ceara white-lipped frog) protein is Ocellatin-PT7.